The chain runs to 499 residues: Aspartyl/glutamyl-tRNA(Asn/Gln) amidotransferase subunit B (499 aa).

The protein belongs to the GatB/GatE family. GatB subfamily. Heterotrimer of A, B and C subunits.

It catalyses the reaction L-glutamyl-tRNA(Gln) + L-glutamine + ATP + H2O = L-glutaminyl-tRNA(Gln) + L-glutamate + ADP + phosphate + H(+). It carries out the reaction L-aspartyl-tRNA(Asn) + L-glutamine + ATP + H2O = L-asparaginyl-tRNA(Asn) + L-glutamate + ADP + phosphate + 2 H(+). Functionally, allows the formation of correctly charged Asn-tRNA(Asn) or Gln-tRNA(Gln) through the transamidation of misacylated Asp-tRNA(Asn) or Glu-tRNA(Gln) in organisms which lack either or both of asparaginyl-tRNA or glutaminyl-tRNA synthetases. The reaction takes place in the presence of glutamine and ATP through an activated phospho-Asp-tRNA(Asn) or phospho-Glu-tRNA(Gln). The sequence is that of Aspartyl/glutamyl-tRNA(Asn/Gln) amidotransferase subunit B from Leifsonia xyli subsp. xyli (strain CTCB07).